Reading from the N-terminus, the 280-residue chain is Bis(5'-nucleosyl)-tetraphosphatase, symmetrical (280 aa).

This sequence belongs to the Ap4A hydrolase family.

The catalysed reaction is P(1),P(4)-bis(5'-adenosyl) tetraphosphate + H2O = 2 ADP + 2 H(+). In terms of biological role, hydrolyzes diadenosine 5',5'''-P1,P4-tetraphosphate to yield ADP. The polypeptide is Bis(5'-nucleosyl)-tetraphosphatase, symmetrical (Escherichia coli O17:K52:H18 (strain UMN026 / ExPEC)).